A 697-amino-acid chain; its full sequence is Elongation factor G (697 aa).

The region spanning 8 to 282 (EDYRNIGIMA…AVVDYLPSPL (275 aa)) is the tr-type G domain. GTP is bound by residues 17–24 (AHIDAGKT), 81–85 (DTPGH), and 135–138 (NKMD).

This sequence belongs to the TRAFAC class translation factor GTPase superfamily. Classic translation factor GTPase family. EF-G/EF-2 subfamily.

It localises to the cytoplasm. Its function is as follows. Catalyzes the GTP-dependent ribosomal translocation step during translation elongation. During this step, the ribosome changes from the pre-translocational (PRE) to the post-translocational (POST) state as the newly formed A-site-bound peptidyl-tRNA and P-site-bound deacylated tRNA move to the P and E sites, respectively. Catalyzes the coordinated movement of the two tRNA molecules, the mRNA and conformational changes in the ribosome. The chain is Elongation factor G from Mycoplasmopsis agalactiae (strain NCTC 10123 / CIP 59.7 / PG2) (Mycoplasma agalactiae).